A 280-amino-acid polypeptide reads, in one-letter code: MGILGKIKNKLKSIGKRVIIDFYRFLDNSGVLKIYEKILEEAIDKDNLPKHVAIIMDGNRRAAEIYGKDRYYGHYLGAEKVREVLRWARDLGINVVTLYAFSTENFRRPKEEVDKLMELFEKKFYEIADDEEIHRYEVRVRAIGRINLLPKNVQKAIKYAEERTKNYNKFFVNIAIAYGGQQEIIDAVKKIAEKVKRGEIEPEDIDKELIDKHLYTANLPFPNPDLIIRTSGEERISNFLIWQSSYSELYFCDIYWPLFRRVDFLRAVRDYQRRQRRFGK.

Residue aspartate 57 is part of the active site. Aspartate 57 lines the Mg(2+) pocket. Substrate contacts are provided by residues 58 to 61 (GNRR), arginine 70, histidine 74, and 102 to 104 (STE). Asparagine 105 (proton acceptor) is an active-site residue. Substrate contacts are provided by residues phenylalanine 106, arginine 108, arginine 229, and 235–237 (RIS). Glutamate 248 is a binding site for Mg(2+).

It belongs to the UPP synthase family. As to quaternary structure, homodimer. The cofactor is Mg(2+).

It catalyses the reaction geranylgeranyl diphosphate + 7 isopentenyl diphosphate = tri-trans,hepta-cis-undecaprenyl diphosphate + 7 diphosphate. Catalyzes the sequential condensation of isopentenyl diphosphate (IPP) with geranylgeranyl diphosphate (GGPP) to yield (2Z,6Z,10Z,14Z,18Z,22Z,26Z,30E,34E,38E)-undecaprenyl diphosphate (tritrans,heptacis-UPP). It is probably the precursor of glycosyl carrier lipids. In Methanocaldococcus jannaschii (strain ATCC 43067 / DSM 2661 / JAL-1 / JCM 10045 / NBRC 100440) (Methanococcus jannaschii), this protein is Tritrans,polycis-undecaprenyl-diphosphate synthase (geranylgeranyl-diphosphate specific).